The primary structure comprises 293 residues: 4-diphosphocytidyl-2-C-methyl-D-erythritol kinase (293 aa).

The active site involves Lys16. 99–109 (PMGAGLGGGSS) contacts ATP. Asp141 is a catalytic residue.

This sequence belongs to the GHMP kinase family. IspE subfamily.

The catalysed reaction is 4-CDP-2-C-methyl-D-erythritol + ATP = 4-CDP-2-C-methyl-D-erythritol 2-phosphate + ADP + H(+). Its pathway is isoprenoid biosynthesis; isopentenyl diphosphate biosynthesis via DXP pathway; isopentenyl diphosphate from 1-deoxy-D-xylulose 5-phosphate: step 3/6. In terms of biological role, catalyzes the phosphorylation of the position 2 hydroxy group of 4-diphosphocytidyl-2C-methyl-D-erythritol. The chain is 4-diphosphocytidyl-2-C-methyl-D-erythritol kinase from Burkholderia mallei (strain NCTC 10247).